Here is a 392-residue protein sequence, read N- to C-terminus: MKCLWLLVITVLCLRCDTAGTKPRRGRGSMWWGIAKAGEPNNLSPVSPGVLFMDPAVHATLRRKQRRLARENPGVLAAVAKAQYAFAECQHQFKYRRWNCSTRNFLRGKNLFGKIVDRGCRETAFIYAITSAGVTHSLARACREASIESCTCDYSHRPRAAQNPVGGRANVRVWKWGGCSDNIGFGFRFSREFVDTGERGKTLREKMNLHNNEAGRRHVQTEMKQECKCHGMSGSCTVKTCWMRLPSFRSVGDSLKDRFDGASRVMLSKADVETPAQRNEAAPHRVPRKDRYRFQLRPHNPDHKSPGVKDLVYLESSPGFCEKNPRLGIPGTHGRACNDTSIGVDGCDLMCCGRGYKTNTMFVVERCNCTFHWCCEVKCKLCRTEKVVHTCL.

An N-terminal signal peptide occupies residues 1 to 16 (MKCLWLLVITVLCLRC). 11 cysteine pairs are disulfide-bonded: cysteine 89-cysteine 100, cysteine 142-cysteine 150, cysteine 152-cysteine 179, cysteine 227-cysteine 241, cysteine 229-cysteine 236, cysteine 321-cysteine 352, cysteine 337-cysteine 347, cysteine 351-cysteine 391, cysteine 367-cysteine 382, cysteine 369-cysteine 379, and cysteine 374-cysteine 375. A glycan (N-linked (GlcNAc...) asparagine) is linked at asparagine 99. Serine 233 is lipidated: O-palmitoleoyl serine; by PORCN. Residues asparagine 338 and asparagine 368 are each glycosylated (N-linked (GlcNAc...) asparagine).

It belongs to the Wnt family. Post-translationally, palmitoleoylated by porcupine. The lipid group functions as a sorting signal, targeting the ligand to polarized vesicles that transport WNT-1 to unique sites at the cell surface. Depalmitoleoylated by notum, leading to inhibit Wnt signaling pathway.

It is found in the secreted. It localises to the extracellular space. The protein localises to the extracellular matrix. Ligand for members of the frizzled family of seven transmembrane receptors. Probable developmental protein. The chain is Protein Wnt-1 (WNT-1) from Bombyx mori (Silk moth).